We begin with the raw amino-acid sequence, 43 residues long: Metallothionein B (43 aa).

Positions 1–16 are beta; sequence SCAGSCKCKNCRCRSC. A divalent metal cation-binding residues include cysteine 2, cysteine 6, cysteine 8, cysteine 11, cysteine 13, cysteine 16, cysteine 20, cysteine 21, cysteine 23, cysteine 24, cysteine 28, cysteine 31, cysteine 35, and cysteine 37. The alpha stretch occupies residues 17–43; the sequence is RKSCCSCCPAGCNNCVKGCVCKEPASS.

It belongs to the metallothionein superfamily. Type 1 family.

Metallothioneins have a high content of cysteine residues that bind various heavy metals. This is Metallothionein B from Colinus virginianus (Northern bobwhite).